The sequence spans 118 residues: Histone H4 (118 aa).

Residues M1–Q39 are disordered. Positions S7–S22 are enriched in gly residues.

The protein belongs to the histone H4 family. As to quaternary structure, the nucleosome is a histone octamer containing two molecules each of H2A, H2B, H3 and H4 assembled in one H3-H4 heterotetramer and two H2A-H2B heterodimers. The octamer wraps approximately 147 bp of DNA.

The protein resides in the nucleus. It localises to the chromosome. Its function is as follows. Core component of nucleosome. Nucleosomes wrap and compact DNA into chromatin, limiting DNA accessibility to the cellular machineries which require DNA as a template. Histones thereby play a central role in transcription regulation, DNA repair, DNA replication and chromosomal stability. DNA accessibility is regulated via a complex set of post-translational modifications of histones, also called histone code, and nucleosome remodeling. The protein is Histone H4 of Entamoeba histolytica (strain ATCC 30459 / HM-1:IMSS / ABRM).